Here is a 354-residue protein sequence, read N- to C-terminus: MVRFIEENITKMLETKAISNSEVLYVGGDDGDTSPTTKVLHDFQINSGGGLIRSWVDSMRACSPTRPKSFNSQSCWIKEHPSALNMFEEILHKSEGKQIVMFLDYDGTLSPIVDDPDRAFMSKKMRNTVRKLAKCFPTAIVSGRCREKVSSFVKLTELYYAGSHGMDIKGPEQGSKYKKENQSLLCQPATEFLPVINEVYKKLVENTQSIPGAKVENNKFCASVHFRCVEENKWSDLAHQVRSVLKNYPKLMLTQGRKVLEIRPIIKWDKGKALEFLLESLGYDNCTDVFPIYIGDDRTDEDAFKILRDKKQGLGILVSKYAKETNASYSLQEPDEVMVFLERLVEWKQSRCGA.

Belongs to the trehalose phosphatase family. A divalent metal cation is required as a cofactor.

The catalysed reaction is alpha,alpha-trehalose 6-phosphate + H2O = alpha,alpha-trehalose + phosphate. The protein operates within glycan biosynthesis; trehalose biosynthesis. Removes the phosphate from trehalose 6-phosphate to produce free trehalose. Trehalose accumulation in plant may improve abiotic stress tolerance. The polypeptide is Probable trehalose-phosphate phosphatase E (TPPE) (Arabidopsis thaliana (Mouse-ear cress)).